A 238-amino-acid polypeptide reads, in one-letter code: MLRFAITLFAVITSSTCQQYGCLEGDTHKANPSPEPNMHECTLYSESSCCYANFTEQLAHSPIIKVSNSYWNRCGQLSKSCEDFTKKIECFYRCSPHAARWIDPRYTAAIQSVPLCQSFCDDWYEACKDDSICAHNWLTDWERDESGENHCKSKCVPYSEMYANGTDMCQSMWGESFKVSESSCLCLQMNKKDMVAIKHLLSESSEESSSMSSSEEHACQKKLLKFEALQQEEGEERR.

Residues 1-17 form the signal peptide; sequence MLRFAITLFAVITSSTC. A Pyrrolidone carboxylic acid modification is found at glutamine 18. 9 disulfide bridges follow: cysteine 22-cysteine 49, cysteine 41-cysteine 90, cysteine 50-cysteine 94, cysteine 74-cysteine 155, cysteine 81-cysteine 127, cysteine 116-cysteine 186, cysteine 120-cysteine 169, cysteine 133-cysteine 151, and cysteine 184-cysteine 219. Asparagine 53 carries an N-linked (GlcNAc...) asparagine glycan. Asparagine 164 carries an N-linked (GlcNAc...) asparagine glycan. Serine 204, serine 205, serine 208, serine 209, serine 210, serine 212, serine 213, and serine 214 each carry phosphoserine.

The protein belongs to the folate receptor family. Plasma and yolk RBPS have the same carbohydrate components, whereas egg-white RBP has a different, ovomucoid-type carbohydrate chain. Post-translationally, plasma RBP has the same C-terminal sequence as the egg-white RBP, which suggests that the C-terminal residues are cleaved off upon incorporation into the oocyte. As to expression, yolk RBP is synthesized in the liver; egg-white RBP is synthesized in the oviduct.

Its function is as follows. Required for the transport of riboflavin to the developing oocyte. This Gallus gallus (Chicken) protein is Riboflavin-binding protein.